A 293-amino-acid chain; its full sequence is Triosephosphate isomerase (293 aa).

25–27 (NWK) lines the substrate pocket. The Electrophile role is filled by His-117. Catalysis depends on Glu-218, which acts as the Proton acceptor.

This sequence belongs to the triosephosphate isomerase family. As to quaternary structure, homodimer.

It is found in the cytoplasm. It carries out the reaction D-glyceraldehyde 3-phosphate = dihydroxyacetone phosphate. The protein operates within carbohydrate biosynthesis; gluconeogenesis. It functions in the pathway carbohydrate degradation; glycolysis; D-glyceraldehyde 3-phosphate from glycerone phosphate: step 1/1. In terms of biological role, involved in the gluconeogenesis. Catalyzes stereospecifically the conversion of dihydroxyacetone phosphate (DHAP) to D-glyceraldehyde-3-phosphate (G3P). This chain is Triosephosphate isomerase, found in Tropheryma whipplei (strain TW08/27) (Whipple's bacillus).